Consider the following 344-residue polypeptide: Aurora kinase B (344 aa).

A Phosphothreonine modification is found at Thr-35. The disordered stretch occupies residues 46–65 (NAQPTAAPGQKVVENSSGTP). Ser-62 carries the post-translational modification Phosphoserine. Position 64 is a phosphothreonine (Thr-64). A Protein kinase domain is found at 77-327 (FEIGRPLGKG…LAQVSAHPWV (251 aa)). ATP contacts are provided by residues 83-91 (LGKGKFGNV) and Lys-106. Asp-200 (proton acceptor) is an active-site residue. N6-acetyllysine is present on Lys-215. Ser-227 is subject to Phosphoserine. Residue Thr-232 is modified to Phosphothreonine; by autocatalysis.

Belongs to the protein kinase superfamily. Ser/Thr protein kinase family. Aurora subfamily. In terms of assembly, component of the chromosomal passenger complex (CPC) composed of at least BIRC5/survivin, CDCA8/borealin, INCENP, AURKB or AURKC; predominantly independent AURKB- and AURKC-containing complexes exist. Associates with RACGAP1 during M phase. Interacts with SPDYC; this interaction may be required for proper localization of active, Thr-232-phosphorylated AURKB form during prometaphase and metaphase. Interacts with p53/TP53. Interacts (via the middle kinase domain) with NOC2L (via the N- and C-terminus domains). Interacts with CDCA1. Interacts with EVI5. Interacts with JTB. Interacts with NDC80. Interacts with PSMA3. Interacts with RNF2/RING1B. Interacts with SEPTIN1. Interacts with SIRT2. Interacts with TACC1. Interacts with TTC28. Post-translationally, the phosphorylation of Thr-232 requires the binding to INCENP and occurs by means of an autophosphorylation mechanism. Thr-232 phosphorylation is indispensable for the AURKB kinase activity. Acetylated at Lys-215 by KAT5 at kinetochores, increasing AURKB activity and promoting accurate chromosome segregation in mitosis. In terms of processing, ubiquitinated by different BCR (BTB-CUL3-RBX1) E3 ubiquitin ligase complexes. Ubiquitinated by the BCR(KLHL9-KLHL13) E3 ubiquitin ligase complex, ubiquitination leads to removal from mitotic chromosomes and is required for cytokinesis. During anaphase, the BCR(KLHL21) E3 ubiquitin ligase complex recruits the CPC complex from chromosomes to the spindle midzone and mediates the ubiquitination of AURKB. Ubiquitination of AURKB by BCR(KLHL21) E3 ubiquitin ligase complex may not lead to its degradation by the proteasome. Deubiquitinated by USP35; inhibiting CDH1-mediated degradation of AURKB.

It localises to the nucleus. It is found in the chromosome. The protein resides in the centromere. Its subcellular location is the kinetochore. The protein localises to the cytoplasm. It localises to the cytoskeleton. It is found in the spindle. The protein resides in the midbody. It catalyses the reaction L-seryl-[protein] + ATP = O-phospho-L-seryl-[protein] + ADP + H(+). The enzyme catalyses L-threonyl-[protein] + ATP = O-phospho-L-threonyl-[protein] + ADP + H(+). Its activity is regulated as follows. Activity is greatly increased when AURKB is within the CPC complex. In particular, AURKB-phosphorylated INCENP acts as an activator of AURKB. Positive feedback between HASPIN and AURKB contributes to CPC localization. Its function is as follows. Serine/threonine-protein kinase component of the chromosomal passenger complex (CPC), a complex that acts as a key regulator of mitosis. The CPC complex has essential functions at the centromere in ensuring correct chromosome alignment and segregation and is required for chromatin-induced microtubule stabilization and spindle assembly. Involved in the bipolar attachment of spindle microtubules to kinetochores and is a key regulator for the onset of cytokinesis during mitosis. Required for central/midzone spindle assembly and cleavage furrow formation. Key component of the cytokinesis checkpoint, a process required to delay abscission to prevent both premature resolution of intercellular chromosome bridges and accumulation of DNA damage: phosphorylates CHMP4C, leading to retain abscission-competent VPS4 (VPS4A and/or VPS4B) at the midbody ring until abscission checkpoint signaling is terminated at late cytokinesis. AURKB phosphorylates the CPC complex subunits BIRC5/survivin, CDCA8/borealin and INCENP. Phosphorylation of INCENP leads to increased AURKB activity. Other known AURKB substrates involved in centromeric functions and mitosis are CENPA, DES/desmin, GPAF, KIF2C, NSUN2, RACGAP1, SEPTIN1, VIM/vimentin, HASPIN, and histone H3. A positive feedback loop involving HASPIN and AURKB contributes to localization of CPC to centromeres. Phosphorylation of VIM controls vimentin filament segregation in cytokinetic process, whereas histone H3 is phosphorylated at 'Ser-10' and 'Ser-28' during mitosis (H3S10ph and H3S28ph, respectively). AURKB is also required for kinetochore localization of BUB1 and SGO1. Phosphorylation of p53/TP53 negatively regulates its transcriptional activity. Key regulator of active promoters in resting B- and T-lymphocytes: acts by mediating phosphorylation of H3S28ph at active promoters in resting B-cells, inhibiting RNF2/RING1B-mediated ubiquitination of histone H2A and enhancing binding and activity of the USP16 deubiquitinase at transcribed genes. Acts as an inhibitor of CGAS during mitosis: catalyzes phosphorylation of the N-terminus of CGAS during the G2-M transition, blocking CGAS liquid phase separation and activation, and thereby preventing CGAS-induced autoimmunity. Phosphorylates KRT5 during anaphase and telophase. Phosphorylates ATXN10 which promotes phosphorylation of ATXN10 by PLK1 and may play a role in the regulation of cytokinesis and stimulating the proteasomal degradation of ATXN10. In Bos taurus (Bovine), this protein is Aurora kinase B (AURKB).